The sequence spans 618 residues: Proline--tRNA ligase (618 aa).

Belongs to the class-II aminoacyl-tRNA synthetase family. ProS type 1 subfamily. In terms of assembly, homodimer.

The protein localises to the cytoplasm. The catalysed reaction is tRNA(Pro) + L-proline + ATP = L-prolyl-tRNA(Pro) + AMP + diphosphate. Functionally, catalyzes the attachment of proline to tRNA(Pro) in a two-step reaction: proline is first activated by ATP to form Pro-AMP and then transferred to the acceptor end of tRNA(Pro). As ProRS can inadvertently accommodate and process non-cognate amino acids such as alanine and cysteine, to avoid such errors it has two additional distinct editing activities against alanine. One activity is designated as 'pretransfer' editing and involves the tRNA(Pro)-independent hydrolysis of activated Ala-AMP. The other activity is designated 'posttransfer' editing and involves deacylation of mischarged Ala-tRNA(Pro). The misacylated Cys-tRNA(Pro) is not edited by ProRS. The polypeptide is Proline--tRNA ligase (Streptococcus pyogenes serotype M2 (strain MGAS10270)).